The sequence spans 158 residues: 6,7-dimethyl-8-ribityllumazine synthase (158 aa).

Residues F22, 57–59 (AYE), and 81–83 (AVI) each bind 5-amino-6-(D-ribitylamino)uracil. 86–87 (GT) is a binding site for (2S)-2-hydroxy-3-oxobutyl phosphate. The active-site Proton donor is the H89. 5-amino-6-(D-ribitylamino)uracil is bound at residue F114. R128 lines the (2S)-2-hydroxy-3-oxobutyl phosphate pocket.

Belongs to the DMRL synthase family. As to quaternary structure, forms an icosahedral capsid composed of 60 subunits, arranged as a dodecamer of pentamers.

It catalyses the reaction (2S)-2-hydroxy-3-oxobutyl phosphate + 5-amino-6-(D-ribitylamino)uracil = 6,7-dimethyl-8-(1-D-ribityl)lumazine + phosphate + 2 H2O + H(+). The protein operates within cofactor biosynthesis; riboflavin biosynthesis; riboflavin from 2-hydroxy-3-oxobutyl phosphate and 5-amino-6-(D-ribitylamino)uracil: step 1/2. Catalyzes the formation of 6,7-dimethyl-8-ribityllumazine by condensation of 5-amino-6-(D-ribitylamino)uracil with 3,4-dihydroxy-2-butanone 4-phosphate. This is the penultimate step in the biosynthesis of riboflavin. The chain is 6,7-dimethyl-8-ribityllumazine synthase from Pseudoalteromonas atlantica (strain T6c / ATCC BAA-1087).